Here is a 561-residue protein sequence, read N- to C-terminus: Proline--tRNA ligase (561 aa).

Belongs to the class-II aminoacyl-tRNA synthetase family. ProS type 1 subfamily. Homodimer.

It is found in the cytoplasm. The enzyme catalyses tRNA(Pro) + L-proline + ATP = L-prolyl-tRNA(Pro) + AMP + diphosphate. In terms of biological role, catalyzes the attachment of proline to tRNA(Pro) in a two-step reaction: proline is first activated by ATP to form Pro-AMP and then transferred to the acceptor end of tRNA(Pro). As ProRS can inadvertently accommodate and process non-cognate amino acids such as alanine and cysteine, to avoid such errors it has two additional distinct editing activities against alanine. One activity is designated as 'pretransfer' editing and involves the tRNA(Pro)-independent hydrolysis of activated Ala-AMP. The other activity is designated 'posttransfer' editing and involves deacylation of mischarged Ala-tRNA(Pro). The misacylated Cys-tRNA(Pro) is not edited by ProRS. This chain is Proline--tRNA ligase, found in Thermosipho africanus (strain TCF52B).